Consider the following 391-residue polypeptide: Protein kinase ORF14 (391 aa).

The region spanning 109–391 (VPLRHTRGNI…ETLVDEFSKI (283 aa)) is the Protein kinase domain. Position 134 (lysine 134) interacts with ATP. Aspartate 235 serves as the catalytic Proton acceptor.

This sequence belongs to the protein kinase superfamily. Ser/Thr protein kinase family.

The enzyme catalyses L-seryl-[protein] + ATP = O-phospho-L-seryl-[protein] + ADP + H(+). The catalysed reaction is L-threonyl-[protein] + ATP = O-phospho-L-threonyl-[protein] + ADP + H(+). The polypeptide is Protein kinase ORF14 (ORF14) (Ictalurid herpesvirus 1 (strain Auburn) (IcHV-1)).